Consider the following 793-residue polypeptide: DnaJ homolog subfamily C member 10 (793 aa).

The N-terminal stretch at 1-32 is a signal peptide; that stretch reads MGVWLNKDDFIRDLKRISLCLLILYVVVVVGT. Residues 35-100 enclose the J domain; sequence NFYSLLGVSK…DLRKKYDKYG (66 aa). The 103-residue stretch at 130–232 folds into the Thioredoxin 1 domain; that stretch reads EIITLERREF…ESLVAFAMQH (103 aa). A disulfide bond links C158 and C161. Trxb regions lie at residues 235-350 and 348-463; these read STVT…LPDF and PDFE…PQNF. Thioredoxin domains lie at 454–553, 557–665, and 671–776; these read HVTT…IEDL, SVVS…SWGL, and ASID…ALIY. C480 and C483 are oxidised to a cystine. A glycan (N-linked (GlcNAc...) asparagine) is linked at N530. Disulfide bonds link C588–C591 and C700–C703. The short motif at 790–793 is the Prevents secretion from ER element; the sequence is KDEL.

Interacts with HSPA5 (via its J domain). Interacts with EDEM1. Ubiquitous. Particularly abundant in secretory tissues. Ubiquitous in fetal tissues and tumor tissues. Higher expression in fetal tissues than in adult tissues. Expressed in testis, pancreas, fetal thymus and fetal kidney. High expression in heart, liver, kidney, and testis. Low expression in spleen and skeletal muscle.

It is found in the endoplasmic reticulum lumen. Its function is as follows. Endoplasmic reticulum disulfide reductase involved both in the correct folding of proteins and degradation of misfolded proteins. Required for efficient folding of proteins in the endoplasmic reticulum by catalyzing the removal of non-native disulfide bonds formed during the folding of proteins, such as LDLR. Also involved in endoplasmic reticulum-associated degradation (ERAD) by reducing incorrect disulfide bonds in misfolded glycoproteins recognized by EDEM1. Interaction with HSPA5 is required its activity, not for the disulfide reductase activity, but to facilitate the release of DNAJC10 from its substrate. Promotes apoptotic signaling pathway in response to endoplasmic reticulum stress. This Mus musculus (Mouse) protein is DnaJ homolog subfamily C member 10 (Dnajc10).